The chain runs to 510 residues: Aromatic-L-amino-acid decarboxylase (510 aa).

Positions 1-17 (MSHIPISNTIPTKQTDG) are enriched in polar residues. The tract at residues 1-28 (MSHIPISNTIPTKQTDGNGKANISPDKL) is disordered. T117 contacts substrate. Pyridoxal 5'-phosphate-binding residues include A183, S184, H227, D305, and N334. Residue H227 coordinates substrate. Residue H227 is part of the active site. K337 is modified (N6-(pyridoxal phosphate)lysine). The disordered stretch occupies residues 358 to 384 (NAFNVDPLYLKHDMQGSAPDYRHWQIP).

Belongs to the group II decarboxylase family. In terms of assembly, homodimer. It depends on pyridoxal 5'-phosphate as a cofactor. In terms of tissue distribution, hypoderm isoform is expressed only in hypodermal epithelium and the CNS isoform only in central nervous system. Expressed in the adult head (at protein level).

The catalysed reaction is L-dopa + H(+) = dopamine + CO2. It catalyses the reaction 5-hydroxy-L-tryptophan + H(+) = serotonin + CO2. Catalyzes the decarboxylation of L-3,4-dihydroxyphenylalanine (L-DOPA) to dopamine and L-5-hydroxytryptophan (5-HTP) to serotonin. Catalyzes the formation of serotonin more efficiently than dopamine. Displays no activity to tyrosine. Variation in the synthesis of bioamines may be a factor contributing to natural variation in life span. The sequence is that of Aromatic-L-amino-acid decarboxylase (Ddc) from Drosophila melanogaster (Fruit fly).